A 526-amino-acid polypeptide reads, in one-letter code: CTP synthase (526 aa).

The interval Met1–Leu270 is amidoligase domain. Ser12 contacts CTP. Ser12 is a UTP binding site. ATP contacts are provided by residues Gly13–Ile18 and Asp70. Mg(2+)-binding residues include Asp70 and Glu145. CTP contacts are provided by residues Asp152 to Glu154, Lys191 to Gln196, and Lys227. UTP is bound by residues Lys191–Gln196 and Lys227. Positions Val293–Thr525 constitute a Glutamine amidotransferase type-1 domain. Gly349 lines the L-glutamine pocket. Cys376 functions as the Nucleophile; for glutamine hydrolysis in the catalytic mechanism. L-glutamine is bound by residues Leu377 to Gln380, Glu400, and Arg455. Residues His498 and Glu500 contribute to the active site.

Belongs to the CTP synthase family. As to quaternary structure, homotetramer.

The catalysed reaction is UTP + L-glutamine + ATP + H2O = CTP + L-glutamate + ADP + phosphate + 2 H(+). It carries out the reaction L-glutamine + H2O = L-glutamate + NH4(+). The enzyme catalyses UTP + NH4(+) + ATP = CTP + ADP + phosphate + 2 H(+). The protein operates within pyrimidine metabolism; CTP biosynthesis via de novo pathway; CTP from UDP: step 2/2. Its activity is regulated as follows. Allosterically activated by GTP, when glutamine is the substrate; GTP has no effect on the reaction when ammonia is the substrate. The allosteric effector GTP functions by stabilizing the protein conformation that binds the tetrahedral intermediate(s) formed during glutamine hydrolysis. Inhibited by the product CTP, via allosteric rather than competitive inhibition. Its function is as follows. Catalyzes the ATP-dependent amination of UTP to CTP with either L-glutamine or ammonia as the source of nitrogen. Regulates intracellular CTP levels through interactions with the four ribonucleotide triphosphates. This chain is CTP synthase, found in Methanoregula boonei (strain DSM 21154 / JCM 14090 / 6A8).